A 330-amino-acid polypeptide reads, in one-letter code: Glycerol-3-phosphate dehydrogenase [NAD(P)+] (330 aa).

The NADPH site is built by serine 11, phenylalanine 12, arginine 32, and lysine 106. Lysine 106, glycine 133, and serine 135 together coordinate sn-glycerol 3-phosphate. Alanine 137 lines the NADPH pocket. Sn-glycerol 3-phosphate contacts are provided by lysine 188, aspartate 241, serine 251, arginine 252, and asparagine 253. Residue lysine 188 is the Proton acceptor of the active site. Arginine 252 contributes to the NADPH binding site. NADPH contacts are provided by valine 276 and glutamate 278.

It belongs to the NAD-dependent glycerol-3-phosphate dehydrogenase family.

It localises to the cytoplasm. It catalyses the reaction sn-glycerol 3-phosphate + NAD(+) = dihydroxyacetone phosphate + NADH + H(+). The enzyme catalyses sn-glycerol 3-phosphate + NADP(+) = dihydroxyacetone phosphate + NADPH + H(+). Its pathway is membrane lipid metabolism; glycerophospholipid metabolism. Functionally, catalyzes the reduction of the glycolytic intermediate dihydroxyacetone phosphate (DHAP) to sn-glycerol 3-phosphate (G3P), the key precursor for phospholipid synthesis. The polypeptide is Glycerol-3-phosphate dehydrogenase [NAD(P)+] (Clostridium botulinum (strain Alaska E43 / Type E3)).